We begin with the raw amino-acid sequence, 140 residues long: ATP synthase epsilon chain (140 aa).

The protein belongs to the ATPase epsilon chain family. In terms of assembly, F-type ATPases have 2 components, CF(1) - the catalytic core - and CF(0) - the membrane proton channel. CF(1) has five subunits: alpha(3), beta(3), gamma(1), delta(1), epsilon(1). CF(0) has three main subunits: a, b and c.

It is found in the cell inner membrane. Produces ATP from ADP in the presence of a proton gradient across the membrane. This chain is ATP synthase epsilon chain, found in Xanthomonas oryzae pv. oryzae (strain MAFF 311018).